Consider the following 60-residue polypeptide: Toxin 5 (60 aa).

4 disulfide bridges follow: Cys3–Cys22, Cys17–Cys39, Cys41–Cys52, and Cys53–Cys58.

This sequence belongs to the three-finger toxin family. Short-chain subfamily. Type I alpha-neurotoxin sub-subfamily. In terms of tissue distribution, expressed by the venom gland.

It localises to the secreted. Functionally, binds to muscle nicotinic acetylcholine receptor (nAChR) and inhibit acetylcholine from binding to the receptor, thereby impairing neuromuscular transmission. This is Toxin 5 from Hydrophis schistosus (Beaked sea snake).